The sequence spans 948 residues: Valine--tRNA ligase (948 aa).

The 'HIGH' region signature appears at 40 to 50; it reads PNVTGSLHMGH. The 'KMSKS' region signature appears at 551–555; that stretch reads KMSKS. An ATP-binding site is contributed by Lys554. Residues 879 to 947 are a coiled coil; it reads LIDKGAELAR…LAEQHARISS (69 aa).

This sequence belongs to the class-I aminoacyl-tRNA synthetase family. ValS type 1 subfamily. In terms of assembly, monomer.

The protein localises to the cytoplasm. It catalyses the reaction tRNA(Val) + L-valine + ATP = L-valyl-tRNA(Val) + AMP + diphosphate. Functionally, catalyzes the attachment of valine to tRNA(Val). As ValRS can inadvertently accommodate and process structurally similar amino acids such as threonine, to avoid such errors, it has a 'posttransfer' editing activity that hydrolyzes mischarged Thr-tRNA(Val) in a tRNA-dependent manner. This is Valine--tRNA ligase from Pseudomonas fluorescens (strain ATCC BAA-477 / NRRL B-23932 / Pf-5).